Consider the following 169-residue polypeptide: E1B protein, small T-antigen (169 aa).

This sequence belongs to the adenoviridae E1B 19 kDa protein family.

This Canine adenovirus serotype 1 (strain CLL) (CAdV-1) protein is E1B protein, small T-antigen.